The following is a 298-amino-acid chain: Cobalt-precorrin-5B C(1)-methyltransferase (298 aa).

Belongs to the CbiD family.

It carries out the reaction Co-precorrin-5B + S-adenosyl-L-methionine = Co-precorrin-6A + S-adenosyl-L-homocysteine. It functions in the pathway cofactor biosynthesis; adenosylcobalamin biosynthesis; cob(II)yrinate a,c-diamide from sirohydrochlorin (anaerobic route): step 6/10. Functionally, catalyzes the methylation of C-1 in cobalt-precorrin-5B to form cobalt-precorrin-6A. In Archaeoglobus fulgidus (strain ATCC 49558 / DSM 4304 / JCM 9628 / NBRC 100126 / VC-16), this protein is Cobalt-precorrin-5B C(1)-methyltransferase.